A 1147-amino-acid polypeptide reads, in one-letter code: Myosin light chain kinase, smooth muscle (1147 aa).

The tract at residues methionine 1–proline 41 is actin-binding. Residues methionine 1–threonine 330 are disordered. The interval proline 26–proline 41 is calmodulin-binding. Over residues threonine 43–alanine 55 the composition is skewed to pro residues. A run of 2 repeats spans residues serine 100–glutamate 111 and threonine 112–glutamate 123. The segment at serine 100–glutamate 288 is 16 X 12 AA tandem repeats. Residues threonine 124 to glutamate 132 form a 3; truncated repeat. 13 consecutive repeat copies span residues threonine 133–glutamate 144, serine 145–glutamate 156, threonine 157–glutamate 168, threonine 169–glutamate 180, threonine 181–glutamate 192, threonine 193–glutamate 204, threonine 205–glutamate 216, threonine 217–glutamate 228, threonine 229–glutamate 240, threonine 241–glutamate 252, threonine 253–glutamate 264, threonine 265–glutamate 276, and threonine 277–glutamate 288. Residues proline 292 to valine 692 form an actin-binding (calcium/calmodulin-insensitive) region. Over residues alanine 293–lysine 320 the composition is skewed to basic and acidic residues. Ig-like C2-type domains are found at residues proline 329–threonine 417 and proline 469–threonine 557. Cysteine 350 and cysteine 401 are joined by a disulfide. Disordered regions lie at residues serine 424 to glutamate 476 and serine 644 to glutamate 678. Over residues proline 459–proline 472 the composition is skewed to pro residues. In terms of domain architecture, Fibronectin type-III spans proline 565–glutamate 657. Residues serine 644–threonine 653 show a composition bias toward polar residues. A compositionally biased stretch (acidic residues) spans proline 662–proline 677. Serine 670 bears the Phosphoserine mark. Tyrosine 681 carries the post-translational modification Phosphotyrosine; by ABL1. The 256-residue stretch at tyrosine 696–leucine 951 folds into the Protein kinase domain. Residues leucine 702 to valine 710 and lysine 725 each bind ATP. Tyrosine 807 is modified (phosphotyrosine; by ABL1). The active-site Proton acceptor is the aspartate 817. At tyrosine 867 the chain carries Phosphotyrosine; by ABL1. Positions threonine 943–threonine 1006 are calmodulin-binding. Residues serine 991, serine 992, serine 1004, serine 1005, and serine 1008 each carry the phosphoserine modification. Positions leucine 999 to glutamate 1019 are disordered. Residues arginine 1002–leucine 1013 show a composition bias toward polar residues. At threonine 1010 the chain carries Phosphothreonine. Serine 1011 is modified (phosphoserine). The 90-residue stretch at proline 1041–isoleucine 1130 folds into the Ig-like C2-type 3 domain. Cysteine 1062 and cysteine 1114 are joined by a disulfide.

This sequence belongs to the protein kinase superfamily. CAMK Ser/Thr protein kinase family. In terms of assembly, all isoforms including Telokin bind calmodulin. Interacts with SVIL. Interacts with CTTN; this interaction is reduced during thrombin-induced endothelial cell (EC) contraction but is promoted by the barrier-protective agonist sphingosine 1-phosphate (S1P) within lamellipodia. A complex made of ABL1, CTTN and MYLK regulates cortical actin-based cytoskeletal rearrangement critical to sphingosine 1-phosphate (S1P)-mediated endothelial cell (EC) barrier enhancement. Binds to NAA10/ARD1 and PTK2B/PYK2. Requires Mg(2+) as cofactor. Ca(2+) is required as a cofactor. Post-translationally, the C-terminus is deglutamylated by AGTPBP1/CCP1, AGBL1/CCP4 and AGBL4/CCP6, leading to the formation of Myosin light chain kinase, smooth muscle, deglutamylated form. The consequences of C-terminal deglutamylation are unknown. Can probably be down-regulated by phosphorylation. Tyrosine phosphorylation by ABL1 increases kinase activity, reverses MLCK-mediated inhibition of Arp2/3-mediated actin polymerization, and enhances CTTN-binding. Phosphorylation by SRC promotes CTTN binding. Isoform Telokin is found in all smooth muscle tested except the aorta. It is not present in non-muscle tissue.

Its subcellular location is the cytoplasm. The protein localises to the cell projection. It is found in the lamellipodium. The protein resides in the cleavage furrow. It localises to the cytoskeleton. Its subcellular location is the stress fiber. It catalyses the reaction L-seryl-[myosin light chain] + ATP = O-phospho-L-seryl-[myosin light chain] + ADP + H(+). The enzyme catalyses L-threonyl-[myosin light chain] + ATP = O-phospho-L-threonyl-[myosin light chain] + ADP + H(+). With respect to regulation, all catalytically active isoforms require binding to calcium and calmodulin for activation. Calcium/calmodulin-dependent myosin light chain kinase implicated in smooth muscle contraction via phosphorylation of myosin light chains (MLC). Also regulates actin-myosin interaction through a non-kinase activity. Phosphorylates PTK2B/PYK2 and myosin light-chains. Involved in the inflammatory response (e.g. apoptosis, vascular permeability, leukocyte diapedesis), cell motility and morphology, airway hyperreactivity and other activities relevant to asthma. Required for tonic airway smooth muscle contraction that is necessary for physiological and asthmatic airway resistance. Necessary for gastrointestinal motility. Implicated in the regulation of endothelial as well as vascular permeability, probably via the regulation of cytoskeletal rearrangements. In the nervous system it has been shown to control the growth initiation of astrocytic processes in culture and to participate in transmitter release at synapses formed between cultured sympathetic ganglion cells. Critical participant in signaling sequences that result in fibroblast apoptosis. Plays a role in the regulation of epithelial cell survival. Required for epithelial wound healing, especially during actomyosin ring contraction during purse-string wound closure. Mediates RhoA-dependent membrane blebbing. Triggers TRPC5 channel activity in a calcium-dependent signaling, by inducing its subcellular localization at the plasma membrane. Promotes cell migration (including tumor cells) and tumor metastasis. PTK2B/PYK2 activation by phosphorylation mediates ITGB2 activation and is thus essential to trigger neutrophil transmigration during acute lung injury (ALI). May regulate optic nerve head astrocyte migration. Probably involved in mitotic cytoskeletal regulation. Regulates tight junction probably by modulating ZO-1 exchange in the perijunctional actomyosin ring. Mediates burn-induced microvascular barrier injury; triggers endothelial contraction in the development of microvascular hyperpermeability by phosphorylating MLC. Essential for intestinal barrier dysfunction. Mediates Giardia spp.-mediated reduced epithelial barrier function during giardiasis intestinal infection via reorganization of cytoskeletal F-actin and tight junctional ZO-1. Necessary for hypotonicity-induced Ca(2+) entry and subsequent activation of volume-sensitive organic osmolyte/anion channels (VSOAC) in cervical cancer cells. In Oryctolagus cuniculus (Rabbit), this protein is Myosin light chain kinase, smooth muscle (MYLK).